We begin with the raw amino-acid sequence, 308 residues long: Ornithine carbamoyltransferase (308 aa).

Carbamoyl phosphate contacts are provided by residues 56–59 (STRT), glutamine 83, arginine 107, and 134–137 (HPCQ). Residues asparagine 165, aspartate 225, and 229 to 230 (SM) each bind L-ornithine. Residues 266–267 (CL) and arginine 294 contribute to the carbamoyl phosphate site.

It belongs to the aspartate/ornithine carbamoyltransferase superfamily. OTCase family.

The protein localises to the cytoplasm. It carries out the reaction carbamoyl phosphate + L-ornithine = L-citrulline + phosphate + H(+). It functions in the pathway amino-acid biosynthesis; L-arginine biosynthesis; L-arginine from L-ornithine and carbamoyl phosphate: step 1/3. Functionally, reversibly catalyzes the transfer of the carbamoyl group from carbamoyl phosphate (CP) to the N(epsilon) atom of ornithine (ORN) to produce L-citrulline. The chain is Ornithine carbamoyltransferase from Paracoccus denitrificans (strain Pd 1222).